The primary structure comprises 296 residues: Probable 2-(5''-triphosphoribosyl)-3'-dephosphocoenzyme-A synthase (296 aa).

This sequence belongs to the CitG/MdcB family.

It catalyses the reaction 3'-dephospho-CoA + ATP = 2'-(5''-triphospho-alpha-D-ribosyl)-3'-dephospho-CoA + adenine. The sequence is that of Probable 2-(5''-triphosphoribosyl)-3'-dephosphocoenzyme-A synthase from Streptococcus mutans serotype c (strain ATCC 700610 / UA159).